Here is a 102-residue protein sequence, read N- to C-terminus: Flagellar hook-basal body complex protein FliE (102 aa).

It belongs to the FliE family.

Its subcellular location is the bacterial flagellum basal body. This chain is Flagellar hook-basal body complex protein FliE, found in Halalkalibacterium halodurans (strain ATCC BAA-125 / DSM 18197 / FERM 7344 / JCM 9153 / C-125) (Bacillus halodurans).